The following is a 49-amino-acid chain: uncharacterized protein (49 aa).

This is an uncharacterized protein from Saccharomyces cerevisiae (strain ATCC 204508 / S288c) (Baker's yeast).